We begin with the raw amino-acid sequence, 426 residues long: 6-Hydroxy-7-prenyldeoxybrevianamide E synthase notC (426 aa).

Residue Glu94 participates in substrate binding. The dimethylallyl diphosphate site is built by Arg105, Lys191, and Tyr193. A substrate-binding site is contributed by Tyr195. 6 residues coordinate dimethylallyl diphosphate: Lys267, Tyr269, Gln352, Tyr354, Tyr418, and Tyr422.

The protein belongs to the tryptophan dimethylallyltransferase family.

It catalyses the reaction 6-hydroxydeoxybrevianamide E + dimethylallyl diphosphate = notoamide S + diphosphate. It participates in alkaloid biosynthesis. With respect to regulation, addition of 5 mM Mg(2+), Ca(2+) or Mn(2+) slightly enhances catalysis (about 100-120%). Significant reduction of enzyme activity (2%-35%) is observed with Cu(2+), Zn(2+), Fe(2+), or Sn(2+) (5 mM). Prenyltransferase; part of the gene cluster that mediates the biosynthesis of notoamide, a fungal indole alkaloid that belongs to a family of natural products containing a characteristic bicyclo[2.2.2]diazaoctane core. The first step of notoamide biosynthesis involves coupling of L-proline and L-tryptophan by the bimodular NRPS notE, to produce cyclo-L-tryptophan-L-proline called brevianamide F. The reverse prenyltransferase notF then acts as a deoxybrevianamide E synthase and converts brevianamide F to deoxybrevianamide E via reverse prenylation at C-2 of the indole ring leading to the bicyclo[2.2.2]diazaoctane core. Deoxybrevianamide E is further hydroxylated at C-6 of the indole ring, likely catalyzed by the cytochrome P450 monooxygenase notG, to yield 6-hydroxy-deoxybrevianamide E. 6-hydroxy-deoxybrevianamide E is a specific substrate of the prenyltransferase notC for normal prenylation at C-7 to produce 6-hydroxy-7-prenyl-deoxybrevianamide, also called notoamide S. As the proposed pivotal branching point in notoamide biosynthesis, notoamide S can be diverted to notoamide E through an oxidative pyran ring closure putatively catalyzed by either notH cytochrome P450 monooxygenase or the notD FAD-linked oxidoreductase. This step would be followed by an indole 2,3-epoxidation-initiated pinacol-like rearrangement catalyzed by the notB FAD-dependent monooxygenase leading to the formation of notoamide C and notoamide D. On the other hand notoamide S is converted to notoamide T by notH (or notD), a bifunctional oxidase that also functions as the intramolecular Diels-Alderase responsible for generation of (+)-notoamide T. To generate antipodal (-)-notoaminide T, notH' (or notD') in Aspergillus versicolor is expected to catalyze a Diels-Alder reaction leading to the opposite stereochemistry. The remaining oxidoreductase notD (or notH) likely catalyzes the oxidative pyran ring formation to yield (+)-stephacidin A. The FAD-dependent monooxygenase notI is highly similar to notB and is predicted to catalyze a similar conversion from (+)-stephacidin A to (-)-notoamide B via the 2,3-epoxidation of (+)-stephacidin A followed by a pinacol-type rearrangement. Finally, it remains unclear which enzyme could be responsible for the final hydroxylation steps leading to notoamide A and sclerotiamide. The polypeptide is 6-Hydroxy-7-prenyldeoxybrevianamide E synthase notC (Aspergillus sp. (strain MF297-2)).